A 729-amino-acid chain; its full sequence is Rab-like protein 6 (729 aa).

The residue at position 1 (M1) is an N-acetylmethionine. The interval 39–279 (GVQYNMKIVI…IFLEMMEARS (241 aa)) is small GTPase-like. GTP is bound by residues 50-57 (GDRNTGKT), 100-104 (DVVDK), and 177-179 (YRD). Positions 281-729 (GHASPLAANG…HPGGGDYEEL (449 aa)) are disordered. The span at 290–315 (GQSPSPGSQSPVVPAGAVSTGSSSPG) shows a compositional bias: low complexity. Positions 331 to 351 (SSVPPVPPSEALPPPACPSAP) are enriched in pro residues. The segment covering 395-416 (PDDRLDRSFLEDTTPARDEKKV) has biased composition (basic and acidic residues). S402, S425, S427, S470, S471, S492, S525, and S577 each carry phosphoserine. The span at 489-502 (QQCSEPETKWSSIP) shows a compositional bias: polar residues. Residues 581–595 (DTQRRADDFPVRDDP) show a composition bias toward basic and acidic residues. Phosphoserine is present on S596. Acidic residues predominate over residues 596 to 605 (SDVTDEDEGP). T599 carries the phosphothreonine modification. Over residues 606 to 615 (AEPPPPPKLP) the composition is skewed to pro residues. Basic and acidic residues predominate over residues 635–652 (AGPKESSEEGKEGKTPSK). Phosphoserine is present on residues S640 and S641. Positions 655-693 (KKKKKKGKEEEEKAAKKKSKHKKSKDKEEGKEERRRRQQ) are interaction with CDKN2A. A compositionally biased stretch (basic residues) spans 669–678 (AKKKSKHKKS). Residues 679–689 (KDKEEGKEERR) show a composition bias toward basic and acidic residues. A compositionally biased stretch (gly residues) spans 711–729 (LGGGAPGGRHPGGGDYEEL).

Belongs to the small GTPase superfamily. Rab family. Isoform 1 is O-glycosylated, while other isoforms are not.

It is found in the cytoplasm. Its subcellular location is the nucleus. Its function is as follows. May enhance cellular proliferation. May reduce growth inhibitory activity of CDKN2A. This Homo sapiens (Human) protein is Rab-like protein 6 (RABL6).